We begin with the raw amino-acid sequence, 228 residues long: Small ribosomal subunit protein uS2 (228 aa).

The protein belongs to the universal ribosomal protein uS2 family.

The chain is Small ribosomal subunit protein uS2 from Blochmanniella pennsylvanica (strain BPEN).